A 166-amino-acid chain; its full sequence is Zinc finger CCHC domain-containing protein 13 (166 aa).

A CCHC-type 1; degenerate zinc finger spans residues 4–21 (KDFFACGHSGHWARGCPR). A CCHC-type 2; degenerate zinc finger spans residues 45–62 (YTCYCCGESGRNAKNCVL). 4 CCHC-type zinc fingers span residues 65-82 (NICY…DCKD), 89-106 (QHCY…DCDR), 110-127 (QKCY…DCAQ), and 128-145 (VKCY…NCSK).

The sequence is that of Zinc finger CCHC domain-containing protein 13 (ZCCHC13) from Homo sapiens (Human).